The primary structure comprises 376 residues: Ribosomal RNA large subunit methyltransferase G (376 aa).

It belongs to the methyltransferase superfamily. RlmG family.

The protein localises to the cytoplasm. The catalysed reaction is guanosine(1835) in 23S rRNA + S-adenosyl-L-methionine = N(2)-methylguanosine(1835) in 23S rRNA + S-adenosyl-L-homocysteine + H(+). Its function is as follows. Specifically methylates the guanine in position 1835 (m2G1835) of 23S rRNA. This Klebsiella pneumoniae subsp. pneumoniae (strain ATCC 700721 / MGH 78578) protein is Ribosomal RNA large subunit methyltransferase G.